Consider the following 461-residue polypeptide: Methylenetetrahydrofolate--tRNA-(uracil-5-)-methyltransferase TrmFO (461 aa).

16–21 (GAGLAG) lines the FAD pocket.

It belongs to the MnmG family. TrmFO subfamily. FAD is required as a cofactor.

The protein resides in the cytoplasm. The catalysed reaction is uridine(54) in tRNA + (6R)-5,10-methylene-5,6,7,8-tetrahydrofolate + NADH + H(+) = 5-methyluridine(54) in tRNA + (6S)-5,6,7,8-tetrahydrofolate + NAD(+). It carries out the reaction uridine(54) in tRNA + (6R)-5,10-methylene-5,6,7,8-tetrahydrofolate + NADPH + H(+) = 5-methyluridine(54) in tRNA + (6S)-5,6,7,8-tetrahydrofolate + NADP(+). Functionally, catalyzes the folate-dependent formation of 5-methyl-uridine at position 54 (M-5-U54) in all tRNAs. The protein is Methylenetetrahydrofolate--tRNA-(uracil-5-)-methyltransferase TrmFO of Parasynechococcus marenigrum (strain WH8102).